Here is an 812-residue protein sequence, read N- to C-terminus: MTTTPTAMPVSPSHDVIIAAAQRAARAIPPLWPLASSVAVNPFLGQGSEPLEMAGARLRRASGIAITMPRSWYAERLQSGQIAEQDLQAALQNAPAALRPPNLPALKQAVQAARPAPQALPTVAELARDADAVDWPGIVNERIGHWAAGYFDQGQALWAVGQSGGAYSTWRIIATHDLTPEIAGLAGFARYVAEAPANAEDAIVDCVARLGLSQDALDGYFHRLLTTLGGWGQLARYRLWQAELSGATDACVTDLLAVRLLWEAALLGNGGCTLVPGWQRAVAAYAEPVAATSDDVIDSILQEAAERAAQRKLSAVLAAPSPAQVASGRVKLQMAFCIDVRSEVFRRALESLDSGIQTLGFAGFFGLGIGHRRFASDVVEARLPVLLTPGVTTCAGDATSSAAASDLSARIAARAKRAWGRFKLAAISSFAFVEATGPIYVAKLLRDGLALARPHAPDEPAPRPADGLDLETRLTMATRILKAMSFTGGFARLVVLAGHGAKVVNNPHASALHCGACGGYSGEVNARLLASLLNDSQVRAGLAARGIVIPADTLFLAALHDTTTDAVTLYTADHPSPGHAEDLAQARQWLGAAGALARGERAVRLPRAHRSQDIAHRARDWAEIRPEWALAGCQAFIAAPRSRTAGRDLAGRAFLHDYDWRYDDGFGVLELILTAPVVVASWISLQYYGSTVAPESLGAGNKLLHNVTGGIGVVEGNGGILRTGLPWQSVHDGQRLTHEPLRLSVLIEAPPEAIATILERHPQVRALFDNRWLHLFALDDEGRMAHRYAGDLRWEQNASGARSCDHSVPMLA.

Zn(2+) contacts are provided by Cys337, Asp339, His499, and Cys514.

The protein belongs to the inorganic carbon transporter (TC 9.A.2) DabA family. As to quaternary structure, forms a complex with DabB. Zn(2+) serves as cofactor.

It is found in the cell inner membrane. Its function is as follows. Part of an energy-coupled inorganic carbon pump. This chain is Probable inorganic carbon transporter subunit DabA, found in Xanthomonas euvesicatoria pv. vesicatoria (strain 85-10) (Xanthomonas campestris pv. vesicatoria).